Reading from the N-terminus, the 549-residue chain is CTP synthase (549 aa).

The interval 1–267 (MTKFVFVTGG…AAQVLSLLNL (267 aa)) is amidoligase domain. A CTP-binding site is contributed by S13. Position 13 (S13) interacts with UTP. ATP contacts are provided by residues 14–19 (SIGKGI) and D71. Mg(2+)-binding residues include D71 and E141. CTP is bound by residues 148–150 (DIE), 188–193 (KTKPTQ), and K224. UTP is bound by residues 188 to 193 (KTKPTQ) and K224. One can recognise a Glutamine amidotransferase type-1 domain in the interval 292–534 (EIAIVGKYVR…VQAARTHSSD (243 aa)). Residue G354 coordinates L-glutamine. The active-site Nucleophile; for glutamine hydrolysis is C381. L-glutamine-binding positions include 382-385 (LGMQ), E405, and R462. Active-site residues include H507 and E509.

The protein belongs to the CTP synthase family. Homotetramer.

It carries out the reaction UTP + L-glutamine + ATP + H2O = CTP + L-glutamate + ADP + phosphate + 2 H(+). It catalyses the reaction L-glutamine + H2O = L-glutamate + NH4(+). The enzyme catalyses UTP + NH4(+) + ATP = CTP + ADP + phosphate + 2 H(+). It functions in the pathway pyrimidine metabolism; CTP biosynthesis via de novo pathway; CTP from UDP: step 2/2. With respect to regulation, allosterically activated by GTP, when glutamine is the substrate; GTP has no effect on the reaction when ammonia is the substrate. The allosteric effector GTP functions by stabilizing the protein conformation that binds the tetrahedral intermediate(s) formed during glutamine hydrolysis. Inhibited by the product CTP, via allosteric rather than competitive inhibition. Functionally, catalyzes the ATP-dependent amination of UTP to CTP with either L-glutamine or ammonia as the source of nitrogen. Regulates intracellular CTP levels through interactions with the four ribonucleotide triphosphates. This chain is CTP synthase, found in Cyanothece sp. (strain PCC 7425 / ATCC 29141).